The sequence spans 269 residues: Formamidopyrimidine-DNA glycosylase (269 aa).

P2 acts as the Schiff-base intermediate with DNA in catalysis. Catalysis depends on E3, which acts as the Proton donor. The active-site Proton donor; for beta-elimination activity is K57. 3 residues coordinate DNA: H90, R109, and K150. An FPG-type zinc finger spans residues 235–269 (QVYGRKGEPCRVCGTPIVATKHAQRATFYCRQCQK). R259 acts as the Proton donor; for delta-elimination activity in catalysis.

The protein belongs to the FPG family. Monomer. It depends on Zn(2+) as a cofactor.

The enzyme catalyses Hydrolysis of DNA containing ring-opened 7-methylguanine residues, releasing 2,6-diamino-4-hydroxy-5-(N-methyl)formamidopyrimidine.. It catalyses the reaction 2'-deoxyribonucleotide-(2'-deoxyribose 5'-phosphate)-2'-deoxyribonucleotide-DNA = a 3'-end 2'-deoxyribonucleotide-(2,3-dehydro-2,3-deoxyribose 5'-phosphate)-DNA + a 5'-end 5'-phospho-2'-deoxyribonucleoside-DNA + H(+). Functionally, involved in base excision repair of DNA damaged by oxidation or by mutagenic agents. Acts as a DNA glycosylase that recognizes and removes damaged bases. Has a preference for oxidized purines, such as 7,8-dihydro-8-oxoguanine (8-oxoG). Has AP (apurinic/apyrimidinic) lyase activity and introduces nicks in the DNA strand. Cleaves the DNA backbone by beta-delta elimination to generate a single-strand break at the site of the removed base with both 3'- and 5'-phosphates. This chain is Formamidopyrimidine-DNA glycosylase, found in Escherichia coli O6:H1 (strain CFT073 / ATCC 700928 / UPEC).